We begin with the raw amino-acid sequence, 249 residues long: Solute carrier family 25 member 35 (249 aa).

Solcar repeat units lie at residues 1–90 (MDFL…AEAG) and 152–243 (QSWK…LRMV). Transmembrane regions (helical) follow at residues 38–58 (TYQR…KVDG), 59–79 (LAAL…MNGI), 154–174 (WKVA…AMTP), and 226–249 (LGPH…TYTK).

Belongs to the mitochondrial carrier (TC 2.A.29) family.

It is found in the mitochondrion inner membrane. The catalysed reaction is a dicarboxylate(in) + sulfate(out) = a dicarboxylate(out) + sulfate(in). Functionally, putative antiporter that exchanges dicarboxylates and sulfur oxoanions across the inner membrane of mitochondria. The chain is Solute carrier family 25 member 35 (SLC25A35) from Bos taurus (Bovine).